The chain runs to 325 residues: Ribosomal RNA small subunit methyltransferase C (325 aa).

Belongs to the methyltransferase superfamily. RsmC family. In terms of assembly, monomer.

It localises to the cytoplasm. The catalysed reaction is guanosine(1207) in 16S rRNA + S-adenosyl-L-methionine = N(2)-methylguanosine(1207) in 16S rRNA + S-adenosyl-L-homocysteine + H(+). Functionally, specifically methylates the guanine in position 1207 of 16S rRNA in the 30S particle. The chain is Ribosomal RNA small subunit methyltransferase C from Alcanivorax borkumensis (strain ATCC 700651 / DSM 11573 / NCIMB 13689 / SK2).